Consider the following 441-residue polypeptide: Synaptotagmin-1 (441 aa).

Residues 1-69 (MVKLDFSSQD…DVVKEKVMQQ (69 aa)) lie on the Vesicular side of the membrane. Residues 70–96 (TGMPEWAFVFLGFVFILLVLACAFCLI) traverse the membrane as a helical segment. The Cytoplasmic segment spans residues 97–441 (RKLFGKKRHG…EEGDKKDDKK (345 aa)). C2 domains follow at residues 159 to 278 (KLGR…EEWK) and 292 to 425 (SLGD…AQWH). Ca(2+) is bound by residues Asp190, Asp196, Asp248, Phe249, Asp250, Ser253, Lys254, Asp256, Asp323, Asp329, Asp383, Asp385, and Asp391.

The protein belongs to the synaptotagmin family. It depends on Ca(2+) as a cofactor. Localized to regions known to be rich in synapses and appears to be associated with synaptic vesicles. Also found in some non-neuronal secretory structures.

It localises to the cytoplasmic vesicle. The protein resides in the secretory vesicle. The protein localises to the synaptic vesicle membrane. Its subcellular location is the synapse. May have a regulatory role in the membrane interactions during trafficking of synaptic vesicles at the active zone of the synapse. It binds acidic phospholipids with a specificity that requires the presence of both an acidic head group and a diacyl backbone. Involved in necrotic cell death. In Caenorhabditis elegans, this protein is Synaptotagmin-1 (snt-1).